We begin with the raw amino-acid sequence, 610 residues long: MRYIAGIDIGNSSTEVALARQDETGALTITHSALAETTGIKGTLRNVFGIQEALALVAKRAGINVRDISLIRINEATPVIGDVAMETITETIITESTMIGHNPKTPGGAGLGVGITITPEELLTRPADSSYILVVSSAFDFADIANVINASMRAGYQITGVILQRDDGVLVSNRLEKSLPIVDEVLYIDRIPLGMLAAIEVAVPGKVIETLSNPYGIATVFNLNADETKNIVPMARALIGNRSAVVVKTPSGDVKARAIPAGNLELQAQGRTVRVDVAAGAEAIMKAVDGCGKLDNVTGEAGTNIGGMLEHVRQTMAELTNKPSSEIFIQDLLAVDTSVPVSVTGGLAGEFSLEQAVGIASMVKSDRLQMAMIAREIEQKLNIDVQIGGAEAEAAILGALTTPGTTRPLAILDLGAGSTDASIINPKGEIIATHLAGAGDMVTMIIARELGLEDRYLAEEIKKYPLAKVESLFHLRHEDGSVQFFPTPLPPAVFARVCVVKPDELVPLPGDLALEKVRAIRRSAKERVFVTNALRALRQVSPTGNIRDIPFVVLVGGSSLDFEVPQLVTDALAHYRLVAGRGNIRGSEGPRNAVATGLILSWHKEFAHGQ.

11-13 lines the ATP pocket; sequence NSS. Thr105, Asp166, and Asp183 together coordinate Mg(2+). Residues 459–462, 557–558, and Arg591 each bind ATP; these read EEIK and GS.

It belongs to the DdrA/PduG family. Forms a heterotetramer PduG(2)/PduH(2). Mg(2+) serves as cofactor.

It is found in the bacterial microcompartment. It carries out the reaction ATP + H2O = ADP + phosphate + H(+). It functions in the pathway polyol metabolism; 1,2-propanediol degradation. In terms of biological role, large subunit of the propanediol dehydratase-reactivating factor (DDR), which reactivates suicidally inhibited adenosylcobalamin-dependent propanediol dehydratase (diol dehydratase, DDH) found in the bacterial microcompartment (BMC) dedicated to 1,2-propanediol (1,2-PD) degradation. Reactivates inactivated DDH in the presence of ATP, Mg(2+) and free adenosylcobalamin (AdoCbl), by mediating the exchange of the tightly bound damaged cofactor AdoCbl for a free intact one. This subunit contains the adenosine nucleotide binding site. The 1,2-PD-specific bacterial microcompartment (BMC) concentrates low levels of 1,2-PD catabolic enzymes, concentrates volatile reaction intermediates thus enhancing pathway flux and keeps the level of toxic, mutagenic propionaldehyde low. This Salmonella typhimurium (strain LT2 / SGSC1412 / ATCC 700720) protein is Propanediol dehydratase-reactivating factor large subunit.